The sequence spans 394 residues: 5-azacytidine-induced protein 2 (394 aa).

Positions 1–197 (MDALVEDDIC…IELRKAKQTD (197 aa)) are homodimerization. Coiled coils occupy residues 40-76 (ALVT…LIAR) and 102-196 (DRDN…AKQT). Residues 216-257 (SDNMQHAYWELKREMSNLHLVTQVQAELLRKLKTSTAIKKAC) form an interaction with TBK1 and IKBKE region. Residues Ser318 and Ser355 each carry the phosphoserine modification. Residues 355 to 379 (SPPKSSETAFGETKSKTLPLPNLPP) are disordered.

In terms of assembly, homodimer. Interacts with IKBKE, TBK1 and TICAM1. Interacts with TAX1BP1. Interacts with CALCOCO2. In terms of processing, ubiquitinated via 'Lys-48'-linked polyubiquitination by TRIM38, leading to its degradation.

It is found in the cytoplasm. Functionally, adapter protein which binds TBK1 and IKBKE playing a role in antiviral innate immunity. Activates serine/threonine-protein kinase TBK1 and facilitates its oligomerization. Enhances the phosphorylation of NF-kappa-B p65 subunit RELA by TBK1. Promotes TBK1-induced as well as TNF-alpha or PMA-induced activation of NF-kappa-B. Participates in IFNB promoter activation via TICAM1. The polypeptide is 5-azacytidine-induced protein 2 (AZI2) (Macaca fascicularis (Crab-eating macaque)).